The following is a 235-amino-acid chain: Probable transcriptional regulatory protein Cla_1081 (235 aa).

This sequence belongs to the TACO1 family.

It localises to the cytoplasm. This Campylobacter lari (strain RM2100 / D67 / ATCC BAA-1060) protein is Probable transcriptional regulatory protein Cla_1081.